Reading from the N-terminus, the 548-residue chain is Cytochrome P450 monooxygenase hepE (548 aa).

Cysteine 485 serves as a coordination point for heme.

Belongs to the cytochrome P450 family. Heme is required as a cofactor.

The protein operates within secondary metabolite biosynthesis. Its function is as follows. Cytochrome P450 monooxygenase; part of the gene cluster that mediates the biosynthesis of heptelidic acid (HA), a sesquiterpene lactone that acts as an inhibitor of glyceraldehyde-3-phosphatedehydrogenase (GAPDH) and a growth inhibitor of the salt-tolerant lactic acid bacteria in soy sauce brewing. The polypeptide is Cytochrome P450 monooxygenase hepE (Aspergillus oryzae (strain ATCC 42149 / RIB 40) (Yellow koji mold)).